Here is a 261-residue protein sequence, read N- to C-terminus: MHPFRRRVRPAVEAMPEVEISEEGNIRSLHLGSETIQSSMDLDDPPDLVLSYSRAMMGFLLWNDDPKHILQIGLGGGSFARFIDEYLPDAVSVAVDINPQVIAVARAFFQLPEEGDFFEIVEADGADYVKIFRGSTDAILVDGFDGLQIVDALTTEDFFEDCKRALSPKGVFVTNWWSGDKRYQSFIERLLNVFEGRVIELPAATHGNVAVMAFRQSPSLTQWEALRKRADELEGRFGLEFGEFVNRLKQTNQQTAGHLLI.

The PABS domain occupies 1 to 219 (MHPFRRRVRP…AVMAFRQSPS (219 aa)). Residues Asp-96 and 124-125 (DG) each bind S-methyl-5'-thioadenosine. The active-site Proton acceptor is the Asp-142.

It belongs to the spermidine/spermine synthase family. Homodimer or homotetramer.

It localises to the cytoplasm. The catalysed reaction is S-adenosyl 3-(methylsulfanyl)propylamine + putrescine = S-methyl-5'-thioadenosine + spermidine + H(+). It functions in the pathway amine and polyamine biosynthesis; spermidine biosynthesis; spermidine from putrescine: step 1/1. Catalyzes the irreversible transfer of a propylamine group from the amino donor S-adenosylmethioninamine (decarboxy-AdoMet) to putrescine (1,4-diaminobutane) to yield spermidine. The protein is Polyamine aminopropyltransferase of Chromobacterium violaceum (strain ATCC 12472 / DSM 30191 / JCM 1249 / CCUG 213 / NBRC 12614 / NCIMB 9131 / NCTC 9757 / MK).